The chain runs to 528 residues: Putative ABC transporter ATP-binding protein MA_1418 (528 aa).

ABC transporter domains are found at residues 2 to 242 and 262 to 494; these read IELR…TNLT and ISVK…SDYK. Residues 36 to 43 and 294 to 301 each bind ATP; these read GHSAAGKT and GENGSGKT.

The protein belongs to the ABC transporter superfamily.

The protein localises to the cell membrane. Probably part of an ABC transporter complex. Responsible for energy coupling to the transport system. This Methanosarcina acetivorans (strain ATCC 35395 / DSM 2834 / JCM 12185 / C2A) protein is Putative ABC transporter ATP-binding protein MA_1418.